We begin with the raw amino-acid sequence, 793 residues long: Kinesin-associated protein 3 (793 aa).

S60 carries the post-translational modification Phosphoserine. Basic and acidic residues predominate over residues 103-119 (LPGKEKKEKSSKPKDPP). Residues 103-123 (LPGKEKKEKSSKPKDPPPFEG) are disordered. ARM repeat units follow at residues 333–373 (FMEN…NLSF), 374–412 (DTGL…HISM), 494–533 (DGPT…NLTI), 578–620 (DDSC…QMVF), and 621–662 (HQAT…IIAE).

Interacts with SMC3 subunit of the cohesin complex. Heterotrimer of KIFAP3, KIF3A and KIF3B. Interacts with RAP1GDS1/SMG GDS. Post-translationally, phosphorylated on tyrosine residues by SRC in vitro; this reduces the binding affinity of the protein for RAP1GDS1.

Its function is as follows. Involved in tethering the chromosomes to the spindle pole and in chromosome movement. Binds to the tail domain of the KIF3A/KIF3B heterodimer to form a heterotrimeric KIF3 complex and may regulate the membrane binding of this complex. The sequence is that of Kinesin-associated protein 3 (Kifap3) from Mus musculus (Mouse).